Consider the following 526-residue polypeptide: Outer capsid protein VP5 (526 aa).

The segment at 1 to 42 is involved in membrane permeabilization; that stretch reads MGKVIRSLSRFGKKVGNALTSNTAKKIYSTIGKAAERFAESE.

It belongs to the orbivirus VP5 family.

The protein localises to the virion. In terms of biological role, VP5 protein is one of the two proteins (with VP2) which constitute the virus particle outer capsid. Acts as a membrane permeabilization protein that mediates release of viral particles from endosomal compartments into the cytoplasm. Permeabilization activity is probably negatively regulated by VP2 and is triggered by endosomal degradation of VP2 and exposure to low pH. The polypeptide is Outer capsid protein VP5 (Segment-6) (Bluetongue virus 1 (isolate Australia) (BTV 1)).